The primary structure comprises 391 residues: Sister chromatid cohesion protein DCC1 (391 aa).

The protein belongs to the DCC1 family. In terms of assembly, component of the ctf18-RFC complex which consists of ctf18, ctf8, dscc1 and the RFC complex.

It is found in the nucleus. Loads pcna onto primed templates regulating velocity, spacing and restart activity of replication forks. May couple DNA replication to sister chromatid cohesion. This is Sister chromatid cohesion protein DCC1 (dscc1) from Danio rerio (Zebrafish).